A 138-amino-acid chain; its full sequence is Putative nickel-responsive regulator (138 aa).

Histidine 78, histidine 89, histidine 91, and cysteine 97 together coordinate Ni(2+).

The protein belongs to the transcriptional regulatory CopG/NikR family. Requires Ni(2+) as cofactor.

Its function is as follows. Transcriptional regulator. This Pyrococcus horikoshii (strain ATCC 700860 / DSM 12428 / JCM 9974 / NBRC 100139 / OT-3) protein is Putative nickel-responsive regulator.